The following is a 99-amino-acid chain: Gibberellin-regulated protein 2 (99 aa).

The first 26 residues, 1 to 26, serve as a signal peptide directing secretion; it reads MAVFRSTLVLLLIIVCLTTYELHVHA.

Belongs to the GASA family. In terms of processing, six disulfide bonds may be present. As to expression, dry seeds and maturating siliques.

It is found in the secreted. Its function is as follows. Gibberellin-regulated protein that may function in hormonal controlled steps of development such as seed germination, flowering and seed maturation. This chain is Gibberellin-regulated protein 2 (GASA2), found in Arabidopsis thaliana (Mouse-ear cress).